The sequence spans 1495 residues: Terminal uridylyltransferase 7 (1495 aa).

Disordered regions lie at residues 1–30, 43–69, 89–140, and 162–205; these read MGDT…GHPQ, HGSK…RKGP, WMND…EDGY, and LETT…PVID. The span at 15–26 shows a compositional bias: basic and acidic residues; sequence DRGTMDDDDFRR. Thr57 and Thr64 each carry phosphothreonine. Composition is skewed to basic and acidic residues over residues 92-118 and 128-140; these read DSHK…EFKP and QRKD…EDGY. Phosphoserine occurs at positions 132 and 172. A compositionally biased stretch (basic residues) spans 178 to 187; sequence QRSRPRKPRK. A Matrin-type zinc finger spans residues 244–274; the sequence is YTCRLCDVLIESIAFAHKHIKEKRHKKNIKE. The region spanning 551–600 is the PAP-associated 1 domain; the sequence is VGQLWVELLRFYALEFNLADLVISIRVKELVSRELKDWPKKRIAIEDPYS. At Ser600 the chain carries Phosphoserine. Positions 734-756 are enriched in basic and acidic residues; the sequence is DDYKGDKVYHPETGRKNEKEKVG. 2 disordered regions span residues 734–757 and 831–898; these read DDYK…KVGR and THSV…EDDE. Over residues 831-841 the composition is skewed to polar residues; that stretch reads THSVQGQTSEM. Composition is skewed to acidic residues over residues 843–859, 868–880, and 887–898; these read PSDE…EEEE, EDED…DELD, and GDEDALSEEDDE. Ser844 carries the post-translational modification Phosphoserine. Ser893 and Ser939 each carry phosphoserine. Residues 951–1495 form a sufficient for monouridylation activity region; it reads SKLIFTKGKS…ASAKRTQQES (545 aa). The CCHC-type 1 zinc-finger motif lies at 963-980; the sequence is VVCSLCKREGHLKKDCPE. UTP contacts are provided by residues 1047–1050, 1057–1060, Asn1130, Lys1152, 1170–1174, and His1286; these read SSKN, SDLD, and SYAYT. Residues Asp1058 and Asp1060 each contribute to the Mg(2+) site. Residues 1233 to 1286 form the PAP-associated 2 domain; that stretch reads SVGQLWLGLLRFYTEEFDFKEHVISIRRKSLLTTFKKQWTSKYIVIEDPFDLNH. The CCHC-type 2 zinc finger occupies 1345–1362; the sequence is RCCRICGKIGHFMKDCPM. Disordered regions lie at residues 1367-1424 and 1466-1495; these read RRRR…MRAA and CPQF…QQES. The span at 1381-1410 shows a compositional bias: basic and acidic residues; sequence PENKEKRSKEDKEIHNKYTEREVSTKEDKP. The segment at 1451 to 1468 adopts a CCHC-type 3 zinc-finger fold; the sequence is KRCFICGREGHIKKECPQ. Residues 1470-1485 are compositionally biased toward polar residues; that stretch reads KGSSGSLSSKYMTQGK.

This sequence belongs to the DNA polymerase type-B-like family. In terms of assembly, interacts with MOV10; the interaction is RNA-dependent. It depends on Mg(2+) as a cofactor. Requires Mn(2+) as cofactor.

Its subcellular location is the cytoplasm. The catalysed reaction is RNA(n) + UTP = RNA(n)-3'-uridine ribonucleotide + diphosphate. Uridylyltransferase that mediates the terminal uridylation of mRNAs with short (less than 25 nucleotides) poly(A) tails, hence facilitating global mRNA decay. Essential for both oocyte maturation and fertility. Through 3' terminal uridylation of mRNA, sculpts, with TUT7, the maternal transcriptome by eliminating transcripts during oocyte growth. Involved in microRNA (miRNA)-induced gene silencing through uridylation of deadenylated miRNA targets. Also functions as an integral regulator of microRNA biogenesiS using 3 different uridylation mechanisms. Acts as a suppressor of miRNA biogenesis by mediating the terminal uridylation of some miRNA precursors, including that of let-7 (pre-let-7). Uridylated pre-let-7 RNA is not processed by Dicer and undergo degradation. Pre-let-7 uridylation is strongly enhanced in the presence of LIN28A. In the absence of LIN28A, TUT7 and TUT4 monouridylate group II pre-miRNAs, which includes most of pre-let7 members, that shapes an optimal 3' end overhang for efficient processing. Add oligo-U tails to truncated pre-miRNAS with a 5' overhang which may promote rapid degradation of non-functional pre-miRNA species. Does not play a role in replication-dependent histone mRNA degradation. Due to functional redundancy between TUT4 and TUT7, the identification of the specific role of each of these proteins is difficult. TUT4 and TUT7 restrict retrotransposition of long interspersed element-1 (LINE-1) in cooperation with MOV10 counteracting the RNA chaperonne activity of L1RE1. TUT7 uridylates LINE-1 mRNAs in the cytoplasm which inhibits initiation of reverse transcription once in the nucleus, whereas uridylation by TUT4 destabilizes mRNAs in cytoplasmic ribonucleoprotein granules. The polypeptide is Terminal uridylyltransferase 7 (Homo sapiens (Human)).